The primary structure comprises 178 residues: uncharacterized protein (178 aa).

This is an uncharacterized protein from Bacillus subtilis (strain 168).